Reading from the N-terminus, the 756-residue chain is Cilium assembly protein DZIP1L (756 aa).

Positions 1-20 (MLGQFSPGEPYTTSLSSTPP) are disordered. Low complexity predominate over residues 10-19 (PYTTSLSSTP). A coiled-coil region spans residues 108 to 158 (DFLSSQLAGLEERLQAATSLVQQGEGQRAELEKSLQETKQENRRRKQLIAT). The C2H2-type zinc-finger motif lies at 171–194 (HKCQFCEKSFVNYSYLQAHVQRRH). Basic and acidic residues-rich tracts occupy residues 193–202 (RHPEVTDAEK), 237–262 (NLRR…ERWK), 319–335 (DPEK…LRER), and 344–365 (RRKF…KSEN). Disordered stretches follow at residues 193–212 (RHPE…EEME), 233–262 (QQAD…ERWK), 310–365 (NNAS…KSEN), 409–466 (KIKK…MRES), 531–626 (VKSL…AYIT), and 693–756 (IKTP…GTSA). Coiled-coil stretches lie at residues 196–283 (EVTD…FLQE) and 321–416 (EKEM…LSAT). Over residues 534 to 558 (LQKSSGKPTPNTLKQRGKKTSTPLN) the composition is skewed to polar residues. Positions 560–578 (KSLRFRQDSKASDRREKSQ) are enriched in basic and acidic residues. Residues 586–598 (TPTPRSKAPPPNQ) are compositionally biased toward pro residues.

The protein belongs to the DZIP C2H2-type zinc-finger protein family.

It is found in the cytoplasm. The protein localises to the cytoskeleton. It localises to the cilium basal body. The protein resides in the microtubule organizing center. Its subcellular location is the centrosome. It is found in the centriole. Involved in primary cilium formation. Probably acts as a transition zone protein required for localization of PKD1/PC1 and PKD2/PC2 to the ciliary membrane. This chain is Cilium assembly protein DZIP1L (dzip1l), found in Danio rerio (Zebrafish).